Here is a 1223-residue protein sequence, read N- to C-terminus: A disintegrin and metalloproteinase with thrombospondin motifs 14 (1223 aa).

An N-terminal signal peptide occupies residues Met-1–Ala-22. Residues Gly-23 to Arg-252 constitute a propeptide that is removed on maturation. N-linked (GlcNAc...) asparagine glycosylation occurs at Asn-109. The Peptidase M12B domain maps to Tyr-259–Pro-460. Cystine bridges form between Cys-336/Cys-382, Cys-376/Cys-455, and Cys-415/Cys-441. His-398 provides a ligand contact to Zn(2+). Residue Glu-399 is part of the active site. Zn(2+) is bound by residues His-402 and His-408. A Disintegrin domain is found at Phe-461–Gln-551. Asn-475 carries N-linked (GlcNAc...) asparagine glycosylation. Intrachain disulfides connect Cys-482/Cys-507, Cys-493/Cys-516, Cys-502/Cys-535, Cys-529/Cys-540, Cys-564/Cys-601, Cys-568/Cys-606, and Cys-579/Cys-591. In terms of domain architecture, TSP type-1 1 spans Asp-552–Pro-607. Positions Leu-730–Met-846 are spacer. TSP type-1 domains lie at Asp-847–Ser-907, Gln-908–Pro-967, and Cys-968–Gly-1022. Residue Asn-941 is glycosylated (N-linked (GlcNAc...) asparagine). 3 disulfide bridges follow: Cys-980/Cys-1016, Cys-984/Cys-1021, and Cys-995/Cys-1005. Residue Asn-1027 is glycosylated (N-linked (GlcNAc...) asparagine). A PLAC domain is found at Ser-1059–Ala-1097. The interval Pro-1100–Thr-1223 is disordered. The segment covering Asn-1101–Gln-1125 has biased composition (pro residues). The segment covering Pro-1199 to His-1211 has biased composition (basic and acidic residues).

Post-translationally, the precursor is cleaved by a furin endopeptidase. Glycosylated. Can be O-fucosylated by POFUT2 on a serine or a threonine residue found within the consensus sequence C1-X(2)-(S/T)-C2-G of the TSP type-1 repeat domains where C1 and C2 are the first and second cysteine residue of the repeat, respectively. Fucosylated repeats can then be further glycosylated by the addition of a beta-1,3-glucose residue by the glucosyltransferase, B3GALTL. Fucosylation mediates the efficient secretion of ADAMTS family members. Can also be C-glycosylated with one or two mannose molecules on tryptophan residues within the consensus sequence W-X-X-W of the TPRs, and N-glycosylated. These other glycosylations can also facilitate secretion. Expressed in retina and at low levels in brain, lung and placenta. High expression in fetal tissues.

The protein localises to the secreted. Its subcellular location is the extracellular space. It localises to the extracellular matrix. Its function is as follows. Has aminoprocollagen type I processing activity in the absence of ADAMTS2. Seems to be synthesized as a latent enzyme that requires activation to display aminoprocollagen peptidase activity. Cleaves lysyl oxidase LOX at a site downstream of its propeptide cleavage site to produce a short LOX form. The protein is A disintegrin and metalloproteinase with thrombospondin motifs 14 (ADAMTS14) of Homo sapiens (Human).